Reading from the N-terminus, the 355-residue chain is UDP-3-O-acylglucosamine N-acyltransferase (355 aa).

Histidine 258 functions as the Proton acceptor in the catalytic mechanism.

The protein belongs to the transferase hexapeptide repeat family. LpxD subfamily. As to quaternary structure, homotrimer.

It catalyses the reaction a UDP-3-O-[(3R)-3-hydroxyacyl]-alpha-D-glucosamine + a (3R)-hydroxyacyl-[ACP] = a UDP-2-N,3-O-bis[(3R)-3-hydroxyacyl]-alpha-D-glucosamine + holo-[ACP] + H(+). Its pathway is bacterial outer membrane biogenesis; LPS lipid A biosynthesis. In terms of biological role, catalyzes the N-acylation of UDP-3-O-acylglucosamine using 3-hydroxyacyl-ACP as the acyl donor. Is involved in the biosynthesis of lipid A, a phosphorylated glycolipid that anchors the lipopolysaccharide to the outer membrane of the cell. The sequence is that of UDP-3-O-acylglucosamine N-acyltransferase from Bradyrhizobium diazoefficiens (strain JCM 10833 / BCRC 13528 / IAM 13628 / NBRC 14792 / USDA 110).